We begin with the raw amino-acid sequence, 354 residues long: Sphingosine-1-phosphate phosphatase 2 (354 aa).

The next 4 membrane-spanning stretches (helical) occupy residues 43-63, 76-96, 115-135, and 140-160; these read YLFRFSAALGQEVFYITFLPF, LVVIWVLVMYIGQVAKDILKW, YGMPSTHAMAATAISFTLLIS, and YQYPFILGLMMAVVFSTLVCL. Residues 91-99 form a phosphatase sequence motif I region; that stretch reads KDILKWPRP. Positions 118–121 are phosphatase sequence motif II; the sequence is PSTH. Catalysis depends on His-121, which acts as the Proton donor. The tract at residues 161-172 is phosphatase sequence motif III; the sequence is SRLYTGMHTVLD. Catalysis depends on His-168, which acts as the Nucleophile. 5 helical membrane passes run 173-193, 202-222, 235-255, 273-293, and 334-354; these read ILGGVLITAVLIALTYPAWTL, PLFPVCVIVVPFLLCYNYPVS, IVAAGAGVTLGFWINHFFQLV, TDMLVLGLTKFMVGIMLILLV, and TSVGICATTFVPMLHRFLGLL.

This sequence belongs to the type 2 lipid phosphate phosphatase family. Highly expressed in pancreatic islets. Expressed in lung, small interstince, colon, kideny and brain.

It localises to the endoplasmic reticulum membrane. The catalysed reaction is sphinganine 1-phosphate + H2O = sphinganine + phosphate. The enzyme catalyses sphing-4-enine 1-phosphate + H2O = sphing-4-enine + phosphate. It carries out the reaction (4R)-hydroxysphinganine 1-phosphate + H2O = (4R)-hydroxysphinganine + phosphate. Has specific phosphohydrolase activity towards sphingoid base 1-phosphates. Has high phosphohydrolase activity against dihydrosphingosine-1-phosphate and sphingosine-1-phosphate (S1P) in vitro. Sphingosine-1-phosphate phosphatase activity is needed for efficient recycling of sphingosine into the sphingolipid synthesis pathway. May play a role in attenuating intracellular sphingosine 1-phosphate (S1P) signaling. May play a role in pro-inflammatory signaling. Plays a role in the regulation of pancreatic islet beta-cell endoplasmic reticulum stress and proliferation. This is Sphingosine-1-phosphate phosphatase 2 from Mus musculus (Mouse).